The sequence spans 312 residues: Putative pyridoxal kinase BUD16 (312 aa).

Substrate contacts are provided by S9, T44, and Y122. ATP contacts are provided by residues 183-184 (TS) and 211-223 (RVPF…TGVG). Substrate is bound at residue D224.

It belongs to the pyridoxine kinase family. Requires a divalent metal cation as cofactor.

The protein localises to the cytoplasm. The protein resides in the nucleus. It carries out the reaction pyridoxal + ATP = pyridoxal 5'-phosphate + ADP + H(+). Its function is as follows. Required for synthesis of pyridoxal-5-phosphate from vitamin B6. Important for bud site selection. This chain is Putative pyridoxal kinase BUD16 (BUD16), found in Saccharomyces cerevisiae (strain ATCC 204508 / S288c) (Baker's yeast).